The following is a 122-amino-acid chain: Small ribosomal subunit protein uS13 (122 aa).

The interval 97 to 122 is disordered; it reads PVRGQRTHTNARTRKGPAKAIAGKKK.

The protein belongs to the universal ribosomal protein uS13 family. As to quaternary structure, part of the 30S ribosomal subunit. Forms a loose heterodimer with protein S19. Forms two bridges to the 50S subunit in the 70S ribosome.

Functionally, located at the top of the head of the 30S subunit, it contacts several helices of the 16S rRNA. In the 70S ribosome it contacts the 23S rRNA (bridge B1a) and protein L5 of the 50S subunit (bridge B1b), connecting the 2 subunits; these bridges are implicated in subunit movement. Contacts the tRNAs in the A and P-sites. The polypeptide is Small ribosomal subunit protein uS13 (Brucella abortus (strain S19)).